The following is a 270-amino-acid chain: MNIEIREKDDERAVFVVEGVDDTFINTIRRICLVEIPTLAIEDVNIYKNDAKMFDEVLAHRLGLIPIVTDLDSYVMPSECDCESGCQHCRVSFLLKEKCEEGNDSKIVYSKDLKSDDPAVKPVYDTIPIVRLREGEEVELEAIAELGLGSEHAKWQATTTCGYKYYPKIEIDTEKVNDLEEYVEECPRNVLQIEDDTLVVGNIENCSTCRTCQRLSEKDDNAIVVDFEESKYIFKIETDGSLKPFDVLTIACDILSEKADNIINFVNEEE.

[3Fe-4S] cluster-binding residues include C206, C209, and C212.

Belongs to the archaeal Rpo3/eukaryotic RPB3 RNA polymerase subunit family. As to quaternary structure, part of the RNA polymerase complex. [3Fe-4S] cluster is required as a cofactor.

The protein resides in the cytoplasm. The enzyme catalyses RNA(n) + a ribonucleoside 5'-triphosphate = RNA(n+1) + diphosphate. Its function is as follows. DNA-dependent RNA polymerase (RNAP) catalyzes the transcription of DNA into RNA using the four ribonucleoside triphosphates as substrates. The chain is DNA-directed RNA polymerase subunit Rpo3 from Methanosphaera stadtmanae (strain ATCC 43021 / DSM 3091 / JCM 11832 / MCB-3).